We begin with the raw amino-acid sequence, 266 residues long: tRNA pseudouridine synthase A (266 aa).

The active-site Nucleophile is the Asp51. Tyr106 contacts substrate.

It belongs to the tRNA pseudouridine synthase TruA family.

It catalyses the reaction uridine(38/39/40) in tRNA = pseudouridine(38/39/40) in tRNA. Functionally, formation of pseudouridine at positions 38, 39 and 40 in the anticodon stem and loop of transfer RNAs. The protein is tRNA pseudouridine synthase A of Pyrococcus furiosus (strain ATCC 43587 / DSM 3638 / JCM 8422 / Vc1).